Consider the following 73-residue polypeptide: MAFLKKSLFLVLFLAIVPLSICEEEKREEENEEKQEDDDQSEKRGLVSGLLNTAGGLLGDLLGSLGSLSGGES.

Residues 1 to 22 (MAFLKKSLFLVLFLAIVPLSIC) form the signal peptide. The propeptide occupies 23–42 (EEEKREEENEEKQEDDDQSE). A disordered region spans residues 25 to 45 (EKREEENEEKQEDDDQSEKRG). Residues 30–40 (ENEEKQEDDDQ) show a composition bias toward acidic residues. Glycine 70 bears the Glycine amide mark. A propeptide spanning residues 72-73 (ES) is cleaved from the precursor.

This sequence belongs to the frog skin active peptide (FSAP) family. Plasticin subfamily. In terms of tissue distribution, expressed by the skin glands.

It localises to the secreted. Its subcellular location is the target cell membrane. Functionally, peptide with no antimicrobial activity. May act in synergy with cationic peptides by enhancing their activity. Has a moderate hemolytic activity. This is Plasticin-A1 from Agalychnis annae (Blue-sided leaf frog).